Reading from the N-terminus, the 277-residue chain is Large ribosomal subunit protein uL2 (277 aa).

2 disordered regions span residues 32 to 58 and 225 to 277; these read KSLT…RGGG and VAMN…RRNK. The segment covering 258-277 has biased composition (basic residues); the sequence is YKTRKKKRYSDKFIIKRRNK.

The protein belongs to the universal ribosomal protein uL2 family. In terms of assembly, part of the 50S ribosomal subunit. Forms a bridge to the 30S subunit in the 70S ribosome.

Functionally, one of the primary rRNA binding proteins. Required for association of the 30S and 50S subunits to form the 70S ribosome, for tRNA binding and peptide bond formation. It has been suggested to have peptidyltransferase activity; this is somewhat controversial. Makes several contacts with the 16S rRNA in the 70S ribosome. This Borreliella afzelii (strain PKo) (Borrelia afzelii) protein is Large ribosomal subunit protein uL2.